The chain runs to 265 residues: Transcription factor BHLH062 (265 aa).

The interval 1 to 26 is disordered; that stretch reads MVPRDRVNAAAAGGGGEGRLVQSGIV. The segment at 35–48 is basic motif; degenerate; sequence PKRIHKSEREKLKR. One can recognise a bHLH domain in the interval 35-85; it reads PKRIHKSEREKLKRDKQNDLFNELGNLLEPDRQNNGKACVLGETTRILKDL. The segment at 49-85 is helix-loop-helix motif; it reads DKQNDLFNELGNLLEPDRQNNGKACVLGETTRILKDL. Residues 75-130 adopt a coiled-coil conformation; that stretch reads LGETTRILKDLLSQVESLRKENSSLKNESHYVALERNELHDDNSMLRTEILELQNE. A disordered region spans residues 200-265; the sequence is ESATSEDSEP…TNEEDRIGRS (66 aa). Residues 210–220 are compositionally biased toward basic and acidic residues; it reads SQEHGISDHVT. Over residues 245 to 256 the composition is skewed to polar residues; the sequence is QDQQCSSGTSGT.

It belongs to the bHLH protein family. As to quaternary structure, interacts with TIFY11A/JAZ9.

Its subcellular location is the nucleus. Functionally, transcription factor that plays a positive role in salt stress tolerance. Interacts with TIFY11A/JAZ9 and binds to the promoter of some potassium ion transporter genes to regulate potassium homeostasis during salt stress. The sequence is that of Transcription factor BHLH062 from Oryza sativa subsp. japonica (Rice).